We begin with the raw amino-acid sequence, 383 residues long: Succinyl-diaminopimelate desuccinylase (383 aa).

Histidine 73 lines the Zn(2+) pocket. Residue aspartate 75 is part of the active site. A Zn(2+)-binding site is contributed by aspartate 107. The active-site Proton acceptor is glutamate 141. 3 residues coordinate Zn(2+): glutamate 142, glutamate 170, and histidine 356.

The protein belongs to the peptidase M20A family. DapE subfamily. As to quaternary structure, homodimer. The cofactor is Zn(2+). It depends on Co(2+) as a cofactor.

It carries out the reaction N-succinyl-(2S,6S)-2,6-diaminopimelate + H2O = (2S,6S)-2,6-diaminopimelate + succinate. It functions in the pathway amino-acid biosynthesis; L-lysine biosynthesis via DAP pathway; LL-2,6-diaminopimelate from (S)-tetrahydrodipicolinate (succinylase route): step 3/3. Its function is as follows. Catalyzes the hydrolysis of N-succinyl-L,L-diaminopimelic acid (SDAP), forming succinate and LL-2,6-diaminopimelate (DAP), an intermediate involved in the bacterial biosynthesis of lysine and meso-diaminopimelic acid, an essential component of bacterial cell walls. The polypeptide is Succinyl-diaminopimelate desuccinylase (Pseudomonas syringae pv. tomato (strain ATCC BAA-871 / DC3000)).